Here is a 346-residue protein sequence, read N- to C-terminus: Uroporphyrinogen decarboxylase (346 aa).

Substrate-binding positions include 26 to 30, D76, Y153, S208, and H323; that span reads RQAGR.

The protein belongs to the uroporphyrinogen decarboxylase family. In terms of assembly, homodimer.

Its subcellular location is the cytoplasm. The enzyme catalyses uroporphyrinogen III + 4 H(+) = coproporphyrinogen III + 4 CO2. It functions in the pathway porphyrin-containing compound metabolism; protoporphyrin-IX biosynthesis; coproporphyrinogen-III from 5-aminolevulinate: step 4/4. Catalyzes the decarboxylation of four acetate groups of uroporphyrinogen-III to yield coproporphyrinogen-III. The protein is Uroporphyrinogen decarboxylase of Prochlorococcus marinus (strain MIT 9215).